A 524-amino-acid polypeptide reads, in one-letter code: GMP synthase [glutamine-hydrolyzing] (524 aa).

One can recognise a Glutamine amidotransferase type-1 domain in the interval 8–206; sequence KILILDFGSQ…VRKLCQCEAR (199 aa). Residue Cys-85 is the Nucleophile of the active site. Catalysis depends on residues His-180 and Glu-182. The 193-residue stretch at 207 to 399 folds into the GMPS ATP-PPase domain; the sequence is WTTGNIVEDA…LGLPYEMVYR (193 aa). 234–240 provides a ligand contact to ATP; the sequence is SGGVDSS.

In terms of assembly, homodimer.

It catalyses the reaction XMP + L-glutamine + ATP + H2O = GMP + L-glutamate + AMP + diphosphate + 2 H(+). Its pathway is purine metabolism; GMP biosynthesis; GMP from XMP (L-Gln route): step 1/1. In terms of biological role, catalyzes the synthesis of GMP from XMP. The protein is GMP synthase [glutamine-hydrolyzing] of Methylococcus capsulatus (strain ATCC 33009 / NCIMB 11132 / Bath).